A 359-amino-acid polypeptide reads, in one-letter code: RNA 3'-terminal phosphate cyclase (359 aa).

ATP contacts are provided by residues Gln100 and 291 to 294 (HASD). His317 acts as the Tele-AMP-histidine intermediate in catalysis.

The protein belongs to the RNA 3'-terminal cyclase family. Type 1 subfamily.

It localises to the cytoplasm. It carries out the reaction a 3'-end 3'-phospho-ribonucleotide-RNA + ATP = a 3'-end 2',3'-cyclophospho-ribonucleotide-RNA + AMP + diphosphate. In terms of biological role, catalyzes the conversion of 3'-phosphate to a 2',3'-cyclic phosphodiester at the end of RNA. The mechanism of action of the enzyme occurs in 3 steps: (A) adenylation of the enzyme by ATP; (B) transfer of adenylate to an RNA-N3'P to produce RNA-N3'PP5'A; (C) and attack of the adjacent 2'-hydroxyl on the 3'-phosphorus in the diester linkage to produce the cyclic end product. The biological role of this enzyme is unknown but it is likely to function in some aspects of cellular RNA processing. This is RNA 3'-terminal phosphate cyclase from Hyperthermus butylicus (strain DSM 5456 / JCM 9403 / PLM1-5).